The following is an 837-amino-acid chain: Protein translocase subunit SecA (837 aa).

Residues glutamine 85, 103 to 107, and aspartate 493 contribute to the ATP site; that span reads GEGKT. The Zn(2+) site is built by cysteine 821, cysteine 823, cysteine 832, and histidine 833.

The protein belongs to the SecA family. In terms of assembly, monomer and homodimer. Part of the essential Sec protein translocation apparatus which comprises SecA, SecYEG and auxiliary proteins SecDF. Other proteins may also be involved. Zn(2+) serves as cofactor.

It is found in the cell membrane. Its subcellular location is the cytoplasm. The enzyme catalyses ATP + H2O + cellular proteinSide 1 = ADP + phosphate + cellular proteinSide 2.. In terms of biological role, part of the Sec protein translocase complex. Interacts with the SecYEG preprotein conducting channel. Has a central role in coupling the hydrolysis of ATP to the transfer of proteins into and across the cell membrane, serving as an ATP-driven molecular motor driving the stepwise translocation of polypeptide chains across the membrane. The chain is Protein translocase subunit SecA from Streptococcus pneumoniae serotype 2 (strain D39 / NCTC 7466).